The primary structure comprises 377 residues: Gibberellin 20 oxidase 1 (377 aa).

Residues 222-322 form the Fe2OG dioxygenase domain; sequence ENDSIMRLNY…RKSLAFFLCP (101 aa). Fe cation contacts are provided by His247, Asp249, and His303. Arg313 is a catalytic residue.

Belongs to the iron/ascorbate-dependent oxidoreductase family. GA20OX subfamily. Fe(2+) serves as cofactor. Requires L-ascorbate as cofactor. Highly expressed in stems and inflorescence tissues. Detected in seeds, roots, leaves and siliques.

It catalyses the reaction gibberellin A12 + 2 2-oxoglutarate + 3 O2 + H(+) = gibberellin A9 + 2 succinate + 3 CO2 + 2 H2O. The enzyme catalyses gibberellin A12 + 2-oxoglutarate + O2 = gibberellin A15 + succinate + CO2. It carries out the reaction gibberellin A15 + 2-oxoglutarate + O2 = gibberellin A24 + succinate + CO2 + H2O. The catalysed reaction is gibberellin A53 + 2-oxoglutarate + O2 = gibberellin A44 + succinate + CO2. It participates in plant hormone biosynthesis; gibberellin biosynthesis. Its function is as follows. Key oxidase enzyme in the biosynthesis of gibberellin that catalyzes the conversion of GA12 to GA9, via a three-step oxidation at C-20 of the GA skeleton. GA53 is less effectively oxidized than GA12 and is only oxidized one step to GA44. Involved in the promotion of the floral transition, fertility and silique elongation, but plays only a minor role in elongation of seedling organs. Acts redundantly with GA20OX2. The protein is Gibberellin 20 oxidase 1 (GA20OX1) of Arabidopsis thaliana (Mouse-ear cress).